The sequence spans 243 residues: Triosephosphate isomerase (243 aa).

9–11 (NWK) contributes to the substrate binding site. H96 functions as the Electrophile in the catalytic mechanism. The Proton acceptor role is filled by E165. Substrate is bound by residues G171, S204, and 225–226 (GG).

It belongs to the triosephosphate isomerase family. In terms of assembly, homodimer.

It is found in the cytoplasm. The catalysed reaction is D-glyceraldehyde 3-phosphate = dihydroxyacetone phosphate. The protein operates within carbohydrate biosynthesis; gluconeogenesis. Its pathway is carbohydrate degradation; glycolysis; D-glyceraldehyde 3-phosphate from glycerone phosphate: step 1/1. Functionally, involved in the gluconeogenesis. Catalyzes stereospecifically the conversion of dihydroxyacetone phosphate (DHAP) to D-glyceraldehyde-3-phosphate (G3P). The chain is Triosephosphate isomerase from Prochlorococcus marinus (strain MIT 9313).